Here is a 51-residue protein sequence, read N- to C-terminus: FVNQHLCGSHLVEALYLVCGERGFFYTPKAGIVEQCCAGVCSLYQLENYCN.

3 disulfide bridges follow: Cys-7/Cys-37, Cys-19/Cys-50, and Cys-36/Cys-41.

The protein belongs to the insulin family. As to quaternary structure, heterodimer of a B chain and an A chain linked by two disulfide bonds.

Its subcellular location is the secreted. In terms of biological role, insulin decreases blood glucose concentration. It increases cell permeability to monosaccharides, amino acids and fatty acids. It accelerates glycolysis, the pentose phosphate cycle, and glycogen synthesis in liver. In Capra hircus (Goat), this protein is Insulin (INS).